Here is a 212-residue protein sequence, read N- to C-terminus: Interleukin-6 (212 aa).

Positions 1-27 (MNSVSTSAFGPVAFSLGLLLVLPAAFP) are cleaved as a signal peptide. A disulfide bond links C72 and C78. Residue N73 is glycosylated (N-linked (GlcNAc...) asparagine). At S81 the chain carries Phosphoserine. C101 and C111 form a disulfide bridge. N172 carries N-linked (GlcNAc...) asparagine glycosylation.

This sequence belongs to the IL-6 superfamily. As to quaternary structure, component of a hexamer of two molecules each of IL6, IL6R and IL6ST; first binds to IL6R to associate with the signaling subunit IL6ST. Interacts with IL6R (via the N-terminal ectodomain); this interaction may be affected by IL6R-binding with SORL1, hence decreasing IL6 cis signaling. Interacts with SORL1 (via the N-terminal ectodomain); this interaction leads to IL6 internalization and lysosomal degradation. May form a trimeric complex with the soluble SORL1 ectodomain and soluble IL6R receptor; this interaction might stabilize circulating IL6, hence promoting IL6 trans signaling.

The protein localises to the secreted. Its function is as follows. Cytokine with a wide variety of biological functions in immunity, tissue regeneration, and metabolism. Binds to IL6R, then the complex associates to the signaling subunit IL6ST/gp130 to trigger the intracellular IL6-signaling pathway. The interaction with the membrane-bound IL6R and IL6ST stimulates 'classic signaling', whereas the binding of IL6 and soluble IL6R to IL6ST stimulates 'trans-signaling'. Alternatively, 'cluster signaling' occurs when membrane-bound IL6:IL6R complexes on transmitter cells activate IL6ST receptors on neighboring receiver cells. Functionally, IL6 is a potent inducer of the acute phase response. Rapid production of IL6 contributes to host defense during infection and tissue injury, but excessive IL6 synthesis is involved in disease pathology. In the innate immune response, is synthesized by myeloid cells, such as macrophages and dendritic cells, upon recognition of pathogens through toll-like receptors (TLRs) at the site of infection or tissue injury. In the adaptive immune response, is required for the differentiation of B cells into immunoglobulin-secreting cells. Plays a major role in the differentiation of CD4(+) T cell subsets. Essential factor for the development of T follicular helper (Tfh) cells that are required for the induction of germinal-center formation. Required to drive naive CD4(+) T cells to the Th17 lineage. Also required for proliferation of myeloma cells and the survival of plasmablast cells. In terms of biological role, acts as an essential factor in bone homeostasis and on vessels directly or indirectly by induction of VEGF, resulting in increased angiogenesis activity and vascular permeability. Induces, through 'trans-signaling' and synergistically with IL1B and TNF, the production of VEGF. Involved in metabolic controls, is discharged into the bloodstream after muscle contraction increasing lipolysis and improving insulin resistance. 'Trans-signaling' in central nervous system also regulates energy and glucose homeostasis. Mediates, through GLP-1, crosstalk between insulin-sensitive tissues, intestinal L cells and pancreatic islets to adapt to changes in insulin demand. Also acts as a myokine. Plays a protective role during liver injury, being required for maintenance of tissue regeneration. Also has a pivotal role in iron metabolism by regulating HAMP/hepcidin expression upon inflammation or bacterial infection. Through activation of IL6ST-YAP-NOTCH pathway, induces inflammation-induced epithelial regeneration. The sequence is that of Interleukin-6 (IL6) from Macaca thibetana (Pere David's macaque).